The primary structure comprises 951 residues: Valine--tRNA ligase (951 aa).

Positions 42–52 (PNVTGSLHMGH) match the 'HIGH' region motif. The 'KMSKS' region motif lies at 554–558 (KMSKS). Lys-557 is a binding site for ATP. Positions 880–944 (AGLINKEDEL…AEAKAKLIEQ (65 aa)) form a coiled coil.

The protein belongs to the class-I aminoacyl-tRNA synthetase family. ValS type 1 subfamily. In terms of assembly, monomer.

It is found in the cytoplasm. It catalyses the reaction tRNA(Val) + L-valine + ATP = L-valyl-tRNA(Val) + AMP + diphosphate. Its function is as follows. Catalyzes the attachment of valine to tRNA(Val). As ValRS can inadvertently accommodate and process structurally similar amino acids such as threonine, to avoid such errors, it has a 'posttransfer' editing activity that hydrolyzes mischarged Thr-tRNA(Val) in a tRNA-dependent manner. In Shigella boydii serotype 4 (strain Sb227), this protein is Valine--tRNA ligase.